A 210-amino-acid chain; its full sequence is ATP-dependent Clp protease proteolytic subunit (210 aa).

The active-site Nucleophile is serine 106. Residue histidine 131 is part of the active site.

It belongs to the peptidase S14 family. In terms of assembly, fourteen ClpP subunits assemble into 2 heptameric rings which stack back to back to give a disk-like structure with a central cavity, resembling the structure of eukaryotic proteasomes.

Its subcellular location is the cytoplasm. It carries out the reaction Hydrolysis of proteins to small peptides in the presence of ATP and magnesium. alpha-casein is the usual test substrate. In the absence of ATP, only oligopeptides shorter than five residues are hydrolyzed (such as succinyl-Leu-Tyr-|-NHMec, and Leu-Tyr-Leu-|-Tyr-Trp, in which cleavage of the -Tyr-|-Leu- and -Tyr-|-Trp bonds also occurs).. In terms of biological role, cleaves peptides in various proteins in a process that requires ATP hydrolysis. Has a chymotrypsin-like activity. Plays a major role in the degradation of misfolded proteins. In Bartonella quintana (strain Toulouse) (Rochalimaea quintana), this protein is ATP-dependent Clp protease proteolytic subunit.